Consider the following 520-residue polypeptide: Glutamyl-tRNA(Gln) amidotransferase subunit A (520 aa).

Catalysis depends on charge relay system residues Lys80 and Ser155. Ser179 serves as the catalytic Acyl-ester intermediate.

This sequence belongs to the amidase family. GatA subfamily. In terms of assembly, heterotrimer of A, B and C subunits.

It catalyses the reaction L-glutamyl-tRNA(Gln) + L-glutamine + ATP + H2O = L-glutaminyl-tRNA(Gln) + L-glutamate + ADP + phosphate + H(+). In terms of biological role, allows the formation of correctly charged Gln-tRNA(Gln) through the transamidation of misacylated Glu-tRNA(Gln) in organisms which lack glutaminyl-tRNA synthetase. The reaction takes place in the presence of glutamine and ATP through an activated gamma-phospho-Glu-tRNA(Gln). This Renibacterium salmoninarum (strain ATCC 33209 / DSM 20767 / JCM 11484 / NBRC 15589 / NCIMB 2235) protein is Glutamyl-tRNA(Gln) amidotransferase subunit A.